The sequence spans 502 residues: MTDSVVVEGYARLRDGKKWKTRWLVLRKPSPVADCLLLLVFKDKSDKVQGNKERLSATLEELCGLEVGPWYEGVAFTLAILCLTQTTLLGFDSKEALLAWDARLRYSLGEVHRFSVGVLPGTKLESGPATLHLCNNLLALARDVPPVIVGHWNLPDLRRYGPVPNGFVFEGGTRCGYWAGVFLLASVESEQISFLFDCIVRGISPTRGPFGLRPVLPDPSTSETSSEERLNHETLELEKRLSMLSHRSSTASYCPSAGGDDRSISGSSDTSDTSHSDCSVGSRLTIWTEPTSIQPENLGNAGAKAAAQSAEKPLPSGQGGGSQPPTKPPRQLQEIGRQSSSDSGIATGSHSSYSGSFSSYTGSLDSNTGEDYGSVFSLPPHLGQDVRPCTCLNVPGHEYQIPTSLRYLYDTPRSVLQEVGGDTKDNQPPAALGPTTEPAEGDKRSPGEGHLATADGDSPNEHFRSPSESKKSSEAPSGGHPGSCCFKTIVTICAVCGGFKVS.

In terms of domain architecture, PH spans 4–109; the sequence is SVVVEGYARL…WDARLRYSLG (106 aa). Residues 105–210 form the IRS-type PTB domain; that stretch reads RYSLGEVHRF…RGISPTRGPF (106 aa). 4 disordered regions span residues 210 to 232, 249 to 279, 291 to 358, and 418 to 482; these read FGLR…RLNH, STAS…SDCS, TSIQ…GSFS, and EVGG…GHPG. 2 stretches are compositionally biased toward low complexity: residues 264-279 and 301-316; these read ISGS…SDCS and AGAK…PLPS. Residues 336–346 show a composition bias toward polar residues; the sequence is GRQSSSDSGIA. Residues 347–358 are compositionally biased toward low complexity; the sequence is TGSHSSYSGSFS. Residues 459-473 show a composition bias toward basic and acidic residues; that stretch reads PNEHFRSPSESKKSS.

The protein resides in the cell membrane. Its subcellular location is the synapse. Functionally, probable muscle-intrinsic activator of MUSK that plays an essential role in neuromuscular synaptogenesis. Acts in aneural activation of MUSK and subsequent acetylcholine receptor (AchR) clustering in myotubes. The sequence is that of Protein Dok-7 (dok7) from Takifugu rubripes (Japanese pufferfish).